The primary structure comprises 362 residues: Histidinol-phosphate aminotransferase (362 aa).

An N6-(pyridoxal phosphate)lysine modification is found at lysine 211.

Belongs to the class-II pyridoxal-phosphate-dependent aminotransferase family. Histidinol-phosphate aminotransferase subfamily. In terms of assembly, homodimer. Pyridoxal 5'-phosphate is required as a cofactor.

It catalyses the reaction L-histidinol phosphate + 2-oxoglutarate = 3-(imidazol-4-yl)-2-oxopropyl phosphate + L-glutamate. The protein operates within amino-acid biosynthesis; L-histidine biosynthesis; L-histidine from 5-phospho-alpha-D-ribose 1-diphosphate: step 7/9. This chain is Histidinol-phosphate aminotransferase, found in Serratia proteamaculans (strain 568).